The chain runs to 79 residues: Acyl carrier protein (79 aa).

Residues 6–79 enclose the Carrier domain; it reads KEILDGLAEI…VQDVINYIQK (74 aa). The residue at position 41 (S41) is an O-(pantetheine 4'-phosphoryl)serine.

This sequence belongs to the acyl carrier protein (ACP) family. Post-translationally, 4'-phosphopantetheine is transferred from CoA to a specific serine of apo-ACP by AcpS. This modification is essential for activity because fatty acids are bound in thioester linkage to the sulfhydryl of the prosthetic group.

It localises to the cytoplasm. The protein operates within lipid metabolism; fatty acid biosynthesis. Functionally, carrier of the growing fatty acid chain in fatty acid biosynthesis. The chain is Acyl carrier protein from Thermobifida fusca (strain YX).